The primary structure comprises 393 residues: Elongation factor Tu (393 aa).

Positions 10-203 (KPHVNIGTIG…AVDSYIPQPV (194 aa)) constitute a tr-type G domain. The interval 19–26 (GHVDHGKT) is G1. 19–26 (GHVDHGKT) is a GTP binding site. Mg(2+) is bound at residue Thr-26. Residues 60-64 (GITIS) are G2. Positions 81 to 84 (DCPG) are G3. GTP contacts are provided by residues 81 to 85 (DCPGH) and 136 to 139 (NKVD). The tract at residues 136 to 139 (NKVD) is G4. The interval 173–175 (SAL) is G5.

Belongs to the TRAFAC class translation factor GTPase superfamily. Classic translation factor GTPase family. EF-Tu/EF-1A subfamily. Monomer.

Its subcellular location is the cytoplasm. The enzyme catalyses GTP + H2O = GDP + phosphate + H(+). Functionally, GTP hydrolase that promotes the GTP-dependent binding of aminoacyl-tRNA to the A-site of ribosomes during protein biosynthesis. In Chlorobaculum tepidum (strain ATCC 49652 / DSM 12025 / NBRC 103806 / TLS) (Chlorobium tepidum), this protein is Elongation factor Tu.